A 396-amino-acid polypeptide reads, in one-letter code: 1-deoxy-D-xylulose 5-phosphate reductoisomerase (396 aa).

The NADPH site is built by Thr-10, Gly-11, Ser-12, Ile-13, Gln-38, and Asn-124. A 1-deoxy-D-xylulose 5-phosphate-binding site is contributed by Lys-125. Residue Glu-126 coordinates NADPH. Asp-150 is a binding site for Mn(2+). Positions 151, 152, 179, and 202 each coordinate 1-deoxy-D-xylulose 5-phosphate. Mn(2+) is bound at residue Glu-152. Residue Gly-208 coordinates NADPH. The 1-deoxy-D-xylulose 5-phosphate site is built by Ser-215, Asn-220, Lys-221, and Glu-224. Position 224 (Glu-224) interacts with Mn(2+).

It belongs to the DXR family. Requires Mg(2+) as cofactor. It depends on Mn(2+) as a cofactor.

The catalysed reaction is 2-C-methyl-D-erythritol 4-phosphate + NADP(+) = 1-deoxy-D-xylulose 5-phosphate + NADPH + H(+). The protein operates within isoprenoid biosynthesis; isopentenyl diphosphate biosynthesis via DXP pathway; isopentenyl diphosphate from 1-deoxy-D-xylulose 5-phosphate: step 1/6. Catalyzes the NADPH-dependent rearrangement and reduction of 1-deoxy-D-xylulose-5-phosphate (DXP) to 2-C-methyl-D-erythritol 4-phosphate (MEP). This is 1-deoxy-D-xylulose 5-phosphate reductoisomerase from Ralstonia pickettii (strain 12J).